A 90-amino-acid chain; its full sequence is PqqA binding protein 2 (90 aa).

The protein belongs to the PqqD family. As to quaternary structure, monomer. Interacts with PqqE.

Its pathway is cofactor biosynthesis; pyrroloquinoline quinone biosynthesis. In terms of biological role, functions as a PqqA binding protein and presents PqqA to PqqE, in the pyrroloquinoline quinone (PQQ) biosynthetic pathway. This chain is PqqA binding protein 2 (pqqD2), found in Pseudomonas putida (strain ATCC 47054 / DSM 6125 / CFBP 8728 / NCIMB 11950 / KT2440).